The chain runs to 102 residues: Small ribosomal subunit protein uS10 (102 aa).

It belongs to the universal ribosomal protein uS10 family. As to quaternary structure, part of the 30S ribosomal subunit.

Functionally, involved in the binding of tRNA to the ribosomes. This is Small ribosomal subunit protein uS10 from Methylobacillus flagellatus (strain ATCC 51484 / DSM 6875 / VKM B-1610 / KT).